Reading from the N-terminus, the 40-residue chain is Ferredoxin-2 (40 aa).

A 2Fe-2S ferredoxin-type domain is found at 3–40 (YNIKLITPEGTKEITCSDSEYILDAAEEKGLDLPYSCR). [2Fe-2S] cluster is bound at residue cysteine 39.

This sequence belongs to the 2Fe2S plant-type ferredoxin family. It depends on [2Fe-2S] cluster as a cofactor.

The protein localises to the plastid. Its subcellular location is the chloroplast. Ferredoxins are iron-sulfur proteins that transfer electrons in a wide variety of metabolic reactions. This is Ferredoxin-2 from Pisum sativum (Garden pea).